We begin with the raw amino-acid sequence, 634 residues long: Bacteriophytochrome (634 aa).

Cys13 is a binding site for biliverdin IXalpha. The region spanning 13 to 118 is the PAS 1 domain; it reads CAREPIHIPG…YPQQWLVEME (106 aa). A photosensory core domain region spans residues 13-514; it reads CAREPIHIPG…ELMERKRFQQ (502 aa). Residues 151–305 form the GAF domain; the sequence is RVAKGLRSLI…VTDAVARTLA (155 aa). The tract at residues 325-508 is phytochrome-specific (PHY); the sequence is TVREKLITDF…SLRVLIELME (184 aa). The tract at residues 452–480 is tongue domain; that stretch reads WAGNPQLAKLEDIPNSRLSPRKSFDLWQQ. One can recognise a PAS 2 domain in the interval 515-590; the sequence is DFTLLEASLS…ELLQDALRNG (76 aa). The interval 515-634 is PAS9, output module, not required to bind biliverdin IX-alpha, required for dimerization; the sequence is DFTLLEASLS…HWLLQLRDPE (120 aa).

This sequence in the N-terminal section; belongs to the phytochrome family. As to quaternary structure, forms head-to-head homodimers. Contains one covalently linked biliverdin IX-alpha chromophore; present in the crystal structure as a mixture of Pr and Meta-R configurations.

Its function is as follows. Photoreceptor which exists in two forms that are reversibly interconvertible by light: far-red light (733 nm) converts protein to the red-absorbing (Pr) form, while red light (630 nm) partly converts the protein to the far-red-absorbing (Pfr) form. Regulates virulence of X.campestris pv. campestris on its host plants, perhaps by fine-tuning expression to ambient light levels and/or spatial cues. The Pr form may sense light and partially inhibit virulence; in the dark (Pfr form) biofilm and xanathan production rise and bacteria are more virulent. Strains overexpressing this protein have significantly decreased amounts of extracellular beta-1,4-endoglucanase, produce less xanthin and have decreased transcription of genes involved in virulence such as endoglucanases, type 2 secretion systems, xanthan production and flagellar-dependent motility. This is Bacteriophytochrome (bphP) from Xanthomonas campestris pv. campestris (strain 8004).